The primary structure comprises 101 residues: Protein PrgJ (101 aa).

It to S.flexneri MxiI.

Its function is as follows. Required for invasion of epithelial cells. The sequence is that of Protein PrgJ (prgJ) from Salmonella typhimurium (strain LT2 / SGSC1412 / ATCC 700720).